We begin with the raw amino-acid sequence, 171 residues long: S-ribosylhomocysteine lyase (171 aa).

The Fe cation site is built by histidine 54, histidine 58, and cysteine 128.

It belongs to the LuxS family. Homodimer. Fe cation is required as a cofactor.

It carries out the reaction S-(5-deoxy-D-ribos-5-yl)-L-homocysteine = (S)-4,5-dihydroxypentane-2,3-dione + L-homocysteine. Functionally, involved in the synthesis of autoinducer 2 (AI-2) which is secreted by bacteria and is used to communicate both the cell density and the metabolic potential of the environment. The regulation of gene expression in response to changes in cell density is called quorum sensing. Catalyzes the transformation of S-ribosylhomocysteine (RHC) to homocysteine (HC) and 4,5-dihydroxy-2,3-pentadione (DPD). This chain is S-ribosylhomocysteine lyase, found in Proteus mirabilis (strain HI4320).